The chain runs to 65 residues: Large ribosomal subunit protein uL29 (65 aa).

Residues 30-49 are disordered; that stretch reads ERSSVAMGGAPSSPGKMRSI.

This sequence belongs to the universal ribosomal protein uL29 family.

This Picrophilus torridus (strain ATCC 700027 / DSM 9790 / JCM 10055 / NBRC 100828 / KAW 2/3) protein is Large ribosomal subunit protein uL29.